Reading from the N-terminus, the 357-residue chain is Glutamine synthetase root isozyme B (357 aa).

A GS beta-grasp domain is found at Ile-19–Gly-99. One can recognise a GS catalytic domain in the interval Lys-106 to Ser-357.

This sequence belongs to the glutamine synthetase family. In terms of assembly, homooctamer.

It is found in the cytoplasm. The enzyme catalyses L-glutamate + NH4(+) + ATP = L-glutamine + ADP + phosphate + H(+). The chain is Glutamine synthetase root isozyme B (GS3B) from Pisum sativum (Garden pea).